The following is a 157-amino-acid chain: uncharacterized protein (157 aa).

This is an uncharacterized protein from Pseudoalteromonas espejiana (Bacteriophage PM2).